The sequence spans 363 residues: 3-dehydroquinate synthase (363 aa).

Residues 134–135 (TT), lysine 147, and lysine 156 contribute to the NAD(+) site. The Zn(2+) site is built by glutamate 189, histidine 254, and histidine 271.

Belongs to the sugar phosphate cyclases superfamily. Dehydroquinate synthase family. Co(2+) is required as a cofactor. It depends on Zn(2+) as a cofactor. NAD(+) serves as cofactor.

It localises to the cytoplasm. It carries out the reaction 7-phospho-2-dehydro-3-deoxy-D-arabino-heptonate = 3-dehydroquinate + phosphate. It functions in the pathway metabolic intermediate biosynthesis; chorismate biosynthesis; chorismate from D-erythrose 4-phosphate and phosphoenolpyruvate: step 2/7. Functionally, catalyzes the conversion of 3-deoxy-D-arabino-heptulosonate 7-phosphate (DAHP) to dehydroquinate (DHQ). The protein is 3-dehydroquinate synthase of Prochlorococcus marinus (strain MIT 9312).